A 523-amino-acid chain; its full sequence is Maintenance of mitochondrial morphology protein 1 (523 aa).

Residues 1–43 (MAGSTSASLQTPYFPSSTQINPVRVDHTLPLPPSQPSLSFTQG) lie on the Lumenal side of the membrane. A helical membrane pass occupies residues 44-64 (LLVGQLSVVLLIGAFIKFFIF). The Cytoplasmic segment spans residues 65 to 523 (GEAPPPPSRG…GSMPDTVTET (459 aa)). Disordered stretches follow at residues 70 to 118 (PPSR…SSST), 128 to 147 (YYSA…RLYH), 295 to 349 (TSDQ…SKHG), 420 to 474 (RTGL…DRGL), and 492 to 523 (GGHQ…VTET). Composition is skewed to polar residues over residues 74–96 (GLSN…TDSS) and 105–118 (STSN…SSST). Positions 137–147 (TPKHGRPRLYH) are enriched in basic residues. An SMP-LTD domain is found at 151–412 (QPESLDWFNV…EPRVQVVGLP (262 aa)). Polar residues predominate over residues 295–312 (TSDQTMSPIPTPHDTTSE). Positions 449–468 (GVSGGGGSGGGSGGGGGGMR) are enriched in gly residues.

It belongs to the MMM1 family. As to quaternary structure, homodimer. Component of the ER-mitochondria encounter structure (ERMES) or MDM complex, composed of MMM1, MDM10, MDM12 and MDM34. An MMM1 homodimer associates with one molecule of MDM12 on each side in a pairwise head-to-tail manner, and the SMP-LTD domains of MMM1 and MDM12 generate a continuous hydrophobic tunnel for phospholipid trafficking.

It is found in the endoplasmic reticulum membrane. Its function is as follows. Component of the ERMES/MDM complex, which serves as a molecular tether to connect the endoplasmic reticulum (ER) and mitochondria. Components of this complex are involved in the control of mitochondrial shape and protein biogenesis, and function in nonvesicular lipid trafficking between the ER and mitochondria. The MDM12-MMM1 subcomplex functions in the major beta-barrel assembly pathway that is responsible for biogenesis of all outer membrane beta-barrel proteins, and acts in a late step after the SAM complex. The MDM10-MDM12-MMM1 subcomplex further acts in the TOM40-specific pathway after the action of the MDM12-MMM1 complex. Essential for establishing and maintaining the structure of mitochondria and maintenance of mtDNA nucleoids. This chain is Maintenance of mitochondrial morphology protein 1, found in Paracoccidioides lutzii (strain ATCC MYA-826 / Pb01) (Paracoccidioides brasiliensis).